The sequence spans 905 residues: Cation-transporting ATPase pma1 (905 aa).

The next 4 helical transmembrane spans lie at 60-80 (FLLQ…TVKA), 81-101 (FLGS…NAII), 248-268 (FSHT…AVGW), and 283-303 (ALAV…TLAI). Aspartate 333 serves as the catalytic 4-aspartylphosphate intermediate. Transmembrane regions (helical) follow at residues 716-736 (ILIS…VLWL), 774-794 (LLHR…GMFE), 809-829 (MAIQ…SQLG), 848-868 (ILLL…QLPF), and 880-900 (WQQW…AILA).

This sequence belongs to the cation transport ATPase (P-type) (TC 3.A.3) family. Type IIA subfamily.

Its subcellular location is the cell membrane. It catalyses the reaction ATP + H2O = ADP + phosphate + H(+). In terms of biological role, could mediate calcium influx. The chain is Cation-transporting ATPase pma1 (pma1) from Synechocystis sp. (strain ATCC 27184 / PCC 6803 / Kazusa).